Consider the following 436-residue polypeptide: UPF0597 protein YhaM (436 aa).

Belongs to the UPF0597 family.

The protein is UPF0597 protein YhaM of Escherichia coli O45:K1 (strain S88 / ExPEC).